The following is a 59-amino-acid chain: MTMLKLALFFLVVSLIAGLFGFTGISAASAGIAKILFVIFLIVFVVLLVMALAAGKAIL.

The next 2 membrane-spanning stretches (helical) occupy residues 6 to 26 (LALFFLVVSLIAGLFGFTGIS) and 35 to 55 (ILFVIFLIVFVVLLVMALAAG).

Belongs to the UPF0391 family.

The protein resides in the cell membrane. The sequence is that of UPF0391 membrane protein GbCGDNIH1_2123 from Granulibacter bethesdensis (strain ATCC BAA-1260 / CGDNIH1).